A 1173-amino-acid polypeptide reads, in one-letter code: DNA-directed RNA polymerase subunit beta (1173 aa).

The interval 1-23 is disordered; the sequence is MEGSLLVASSTSNNETANTASTD. A compositionally biased stretch (low complexity) spans 8–22; sequence ASSTSNNETANTAST.

It belongs to the RNA polymerase beta chain family. As to quaternary structure, the RNAP catalytic core consists of 2 alpha, 1 beta, 1 beta' and 1 omega subunit. When a sigma factor is associated with the core the holoenzyme is formed, which can initiate transcription.

It catalyses the reaction RNA(n) + a ribonucleoside 5'-triphosphate = RNA(n+1) + diphosphate. Functionally, DNA-dependent RNA polymerase catalyzes the transcription of DNA into RNA using the four ribonucleoside triphosphates as substrates. The sequence is that of DNA-directed RNA polymerase subunit beta from Paenarthrobacter aurescens (strain TC1).